The chain runs to 396 residues: Phosphopentomutase (396 aa).

The Mn(2+) site is built by Asp-13, Asp-288, His-293, Asp-329, His-330, and His-341.

This sequence belongs to the phosphopentomutase family. Requires Mn(2+) as cofactor.

The protein resides in the cytoplasm. It catalyses the reaction 2-deoxy-alpha-D-ribose 1-phosphate = 2-deoxy-D-ribose 5-phosphate. It carries out the reaction alpha-D-ribose 1-phosphate = D-ribose 5-phosphate. It participates in carbohydrate degradation; 2-deoxy-D-ribose 1-phosphate degradation; D-glyceraldehyde 3-phosphate and acetaldehyde from 2-deoxy-alpha-D-ribose 1-phosphate: step 1/2. In terms of biological role, isomerase that catalyzes the conversion of deoxy-ribose 1-phosphate (dRib-1-P) and ribose 1-phosphate (Rib-1-P) to deoxy-ribose 5-phosphate (dRib-5-P) and ribose 5-phosphate (Rib-5-P), respectively. The chain is Phosphopentomutase from Clostridium perfringens (strain SM101 / Type A).